The chain runs to 114 residues: Fumarate reductase subunit D (114 aa).

3 helical membrane passes run 24–44, 50–70, and 92–112; these read VSAI…PFGL, LITF…TIFP, and GGFI…FAVI.

This sequence belongs to the FrdD family. Part of an enzyme complex containing four subunits: a flavoprotein (FrdA), an iron-sulfur protein (FrdB), and two hydrophobic anchor proteins (FrdC and FrdD).

The protein resides in the cell inner membrane. Anchors the catalytic components of the fumarate reductase complex to the cell membrane, binds quinones. The sequence is that of Fumarate reductase subunit D from Haemophilus influenzae (strain PittEE).